Consider the following 502-residue polypeptide: Alpha-globin transcription factor CP2 (502 aa).

In terms of domain architecture, Grh/CP2 DB spans 61–300; that stretch reads ENKILPFQYV…SPGFNSSHSS (240 aa). A DNA-binding region spans residues 133–395; it reads EHQQLEGWRW…VRPRLTIYVC (263 aa). Disordered stretches follow at residues 238–268 and 294–325; these read FKPKGADRKQKTDREKMEKRTPHEKEKYQPS and FNSSHSSFSLGEGNGSPNHQPEPPPPVTDNLL. Over residues 241-265 the composition is skewed to basic and acidic residues; sequence KGADRKQKTDREKMEKRTPHEKEKY. Position 353 is a phosphoserine (Ser353).

It belongs to the grh/CP2 family. CP2 subfamily. As to quaternary structure, binds to DNA as a dimer, isoform 3 does not bind to DNA or affect the binding of isoform 1 to DNA. Interacts with UBP1 and PIAS1, and is probably part of a complex containing TFCP2, UBP1 and PIAS1. Component of the SSP (stage selector protein) complex, which appears to be a heteromer of TFCP2 and 2 copies of NFE4. Ubiquitous. Expressed in brain, ovary, kidney, thymus, spleen, liver, adrenal, heart and lung (at protein level).

The protein resides in the nucleus. Binds a variety of cellular and viral promoters including fibrinogen, alpha-globin, SV40 and HIV-1 promoters. Activation of the alpha-globin promoter in erythroid cells is via synergistic interaction with UBP1. Functions as part of the SSP (stage selector protein) complex. Facilitates the interaction of the gamma-globin genes with enhancer elements contained in the locus control region in fetal erythroid cells. Interacts by binding to the stage selector element (SSE) in the proximal gamma-globin promoter. This Homo sapiens (Human) protein is Alpha-globin transcription factor CP2 (TFCP2).